The following is a 404-amino-acid chain: 6-hydroxytryptophan 2,3-dioxygenase fscD (404 aa).

Position 341 (histidine 341) interacts with heme b.

It belongs to the indoleamine 2,3-dioxygenase family. It depends on heme as a cofactor.

It participates in secondary metabolite biosynthesis. In terms of biological role, 6-hydroxytryptophan 2,3-dioxygenase; part of the fragmented gene cluster that mediates the biosynthesis of fusarochromene, a tryptophan-derived metabolite closely related to a group of mycotoxins including fusarochromanone. Within the pathway, fscD is responsible of the cleavage of the pyrrole ring of 6-hydroxytryptophan. The first step of the pathway is the epimerization of L-tryptophan to D-tryptophan in the presence of the NRPS-like tryptophan epimerase fscC. D-tryptophan is subsequently hydroxylated by the tryptophan 6-hydroxylase fscE to yield 6-hydroxytryptophan. The pyrrole ring undergoes cleavaged by the tryptophan 2,3-dioxygenase fscD and is finally converted to 4-hydroxykyrunenine by the hydrolase fscH. The NRPS-like oxidoreductase fscA reduces the carboxyl group to primary alcohol and the DMATS-type prenyltransferase fscG performs prenylation, followed by the formation of a chromene ring catalyzed by the oxidoreductase fscI, which leads to desacetylfusarochromene. Epoxidation by fscF and rearrangement reactions of chromene double bonds convert compound desacetylfusarochromene to fusarochromanones. Although specific acetyltransferases were not found near the fsc gene cluster, several predicted enzymes containing the N-acetyltransferase superfamily domain are present in the genome of F.equiseti. These predicted enzymes may have the potential to convert desacetylfusarochromene to fusarochromene. This is 6-hydroxytryptophan 2,3-dioxygenase fscD from Fusarium equiseti (Fusarium scirpi).